A 537-amino-acid polypeptide reads, in one-letter code: Cytochrome P450 monooxygenase claR (537 aa).

Residues 23–43 traverse the membrane as a helical segment; that stretch reads VVTITEVALGIITLYLLGSYI. Cysteine 454 lines the heme pocket.

It belongs to the cytochrome P450 family. The cofactor is heme.

The protein localises to the membrane. It catalyses the reaction (2E)-geranylhydroquinone + reduced [NADPH--hemoprotein reductase] + O2 = wigandol + oxidized [NADPH--hemoprotein reductase] + 2 H2O + H(+). The protein operates within secondary metabolite biosynthesis; terpenoid biosynthesis. In terms of biological role, cytochrome P450 monooxygenase; part of the gene cluster that mediates the biosynthesis of clavilactone A, a meroterpenoid that features a unique benzo-fused ten-membered carbocyclic ring unit with an alpha,beta-epoxy-gamma-lactone moiety, forming an intriguing 10/5/3 tricyclic nested skeleton. ClaR, ClaS and ClaT are sufficient to produce clavilactone A. ClaR acts as a macrocyclase to catalyze the oxidative cyclization of the isopentenyl to the nonterpenoid moieties to form the benzo-fused macrocycle, leading to wigantol. The biosynthesis begins with the prenyltransferase claS that transfers geranyl pyrophosphate (GPP) to hydroquinone to produces geranylhydroquinone. The cytochrome P450 monooxygenase claR then catalyzes the diradical coupling reaction between the intramolecular hydroquinone and allyl moieties to form the benzo-fused ten-membered carbocyclic ring unit of wigantol. Finally the cytochrome P450 monooxygenase claT exquisitely and stereoselectively assembles the alpha,beta-epoxy-gamma-lactone moiety, producing clavilactone A via arnebinol A. This chain is Cytochrome P450 monooxygenase claR, found in Ampulloclitocybe clavipes (Club foot).